A 166-amino-acid chain; its full sequence is MANNDQKRDEGYIEKLVQVNRVAKTVKGGRIFTFTALTVVGDGKGRVGFGRGKSREVPAAIQKAMEAARRNMIQVDLKGTTLQYATKAAHGASKVYMQPASEGTGIIAGGAMRAVLEVAGVQNVLAKCYGSTNPVNVVYATFKGLKAMQSPESIAAKRGKSVEEIF.

Positions 12–75 (YIEKLVQVNR…EAARRNMIQV (64 aa)) constitute an S5 DRBM domain.

Belongs to the universal ribosomal protein uS5 family. In terms of assembly, part of the 30S ribosomal subunit. Contacts proteins S4 and S8.

In terms of biological role, with S4 and S12 plays an important role in translational accuracy. Functionally, located at the back of the 30S subunit body where it stabilizes the conformation of the head with respect to the body. In Pseudomonas putida (strain ATCC 700007 / DSM 6899 / JCM 31910 / BCRC 17059 / LMG 24140 / F1), this protein is Small ribosomal subunit protein uS5.